The primary structure comprises 450 residues: MKKIANFANKKVLVLGLAKSGESAARLLDKLGAIVTVNDGKPFEENPAAQSLLEEGIKVVTGGHPLELLDEDFELMVKNPGIPYDNAMVVRALEKKIPVITEVELAYLISEAPIIGITGSNGKTTTTTMIAQVLTAGGQNGLLSGNIGFPASQVAQTASSKDMLVMELSSFQLMGIEDFHPQIAVITNLMPTHLDYHGSVEEYAAAKWNIQKNMTADDYLVLNFNQDWAKEMASQTQATVVPFSTTEKVDGAYLEGDVLTFRGEAIMQVAEIGVPGSHNVENALATIAVAKLRGIDNQTIKEVLSAFGGVKHRLQYVGQVNEVAFYNDSKSTNILATQKALSGFDNSKVILIAGGLDRGNEFDELVPDLKGLKKMVILGQSAARVKRAADQAGVSYLDATDVRDAAHKAFAQAEPGDIVLLSPANASWDMYSNFEVRGDEFLAAFEELKG.

119 to 125 (GSNGKTT) is an ATP binding site.

It belongs to the MurCDEF family.

The protein localises to the cytoplasm. It carries out the reaction UDP-N-acetyl-alpha-D-muramoyl-L-alanine + D-glutamate + ATP = UDP-N-acetyl-alpha-D-muramoyl-L-alanyl-D-glutamate + ADP + phosphate + H(+). The protein operates within cell wall biogenesis; peptidoglycan biosynthesis. Cell wall formation. Catalyzes the addition of glutamate to the nucleotide precursor UDP-N-acetylmuramoyl-L-alanine (UMA). The chain is UDP-N-acetylmuramoylalanine--D-glutamate ligase from Streptococcus sanguinis (strain SK36).